A 144-amino-acid chain; its full sequence is Large ribosomal subunit protein uL11 (144 aa).

It belongs to the universal ribosomal protein uL11 family. Part of the ribosomal stalk of the 50S ribosomal subunit. Interacts with L10 and the large rRNA to form the base of the stalk. L10 forms an elongated spine to which L12 dimers bind in a sequential fashion forming a multimeric L10(L12)X complex. Post-translationally, one or more lysine residues are methylated.

Its function is as follows. Forms part of the ribosomal stalk which helps the ribosome interact with GTP-bound translation factors. The sequence is that of Large ribosomal subunit protein uL11 from Streptomyces avermitilis (strain ATCC 31267 / DSM 46492 / JCM 5070 / NBRC 14893 / NCIMB 12804 / NRRL 8165 / MA-4680).